The following is a 394-amino-acid chain: Small RNA 2'-O-methyltransferase (394 aa).

Asp-78 and Ser-114 together coordinate S-adenosyl-L-methionine. Residues Glu-132, Glu-135, His-136, and His-181 each coordinate Mg(2+).

Belongs to the methyltransferase superfamily. HEN1 family. It depends on Mg(2+) as a cofactor.

The protein localises to the cytoplasm. It carries out the reaction small RNA 3'-end nucleotide + S-adenosyl-L-methionine = small RNA 3'-end 2'-O-methylnucleotide + S-adenosyl-L-homocysteine + H(+). Functionally, methyltransferase that adds a 2'-O-methyl group at the 3'-end of piRNAs, a class of 24 to 30 nucleotide RNAs that are generated by a Dicer-independent mechanism and are primarily derived from transposons and other repeated sequence elements. This probably protects the 3'-end of piRNAs from uridylation activity and subsequent degradation. Stabilization of piRNAs is essential for gametogenesis. The chain is Small RNA 2'-O-methyltransferase (Henmt1) from Rattus norvegicus (Rat).